A 254-amino-acid polypeptide reads, in one-letter code: Distal membrane-arm assembly complex protein 2 (254 aa).

S250 is modified (phosphoserine).

The protein belongs to the ATP synthase subunit s family. Interacts with incompletely assembled mitochondrial NADH:ubiquinone oxidoreductase complex (complex I).

It is found in the mitochondrion. Required for the assembly of the mitochondrial NADH:ubiquinone oxidoreductase complex (complex I). Involved in the assembly of the distal region of complex I. This chain is Distal membrane-arm assembly complex protein 2, found in Rattus norvegicus (Rat).